Here is a 186-residue protein sequence, read N- to C-terminus: Bifunctional protein PyrR (186 aa).

Residues 101–113 carry the PRPP-binding motif; sequence VVLVDDVLYTGRT.

It belongs to the purine/pyrimidine phosphoribosyltransferase family. PyrR subfamily.

The catalysed reaction is UMP + diphosphate = 5-phospho-alpha-D-ribose 1-diphosphate + uracil. Regulates the transcription of the pyrimidine nucleotide (pyr) operon in response to exogenous pyrimidines. In terms of biological role, also displays a weak uracil phosphoribosyltransferase activity which is not physiologically significant. The polypeptide is Bifunctional protein PyrR (Syntrophobacter fumaroxidans (strain DSM 10017 / MPOB)).